Here is a 318-residue protein sequence, read N- to C-terminus: Ribosomal RNA small subunit methyltransferase A (318 aa).

Residues Asn40, Val42, Gly67, Glu88, Asp118, and Asn137 each coordinate S-adenosyl-L-methionine. A compositionally biased stretch (basic and acidic residues) spans 295–305 (SADRGGTDREG). The disordered stretch occupies residues 295–318 (SADRGGTDREGTSPPTAGQGAPAR).

It belongs to the class I-like SAM-binding methyltransferase superfamily. rRNA adenine N(6)-methyltransferase family. RsmA subfamily.

It is found in the cytoplasm. It carries out the reaction adenosine(1518)/adenosine(1519) in 16S rRNA + 4 S-adenosyl-L-methionine = N(6)-dimethyladenosine(1518)/N(6)-dimethyladenosine(1519) in 16S rRNA + 4 S-adenosyl-L-homocysteine + 4 H(+). In terms of biological role, specifically dimethylates two adjacent adenosines (A1518 and A1519) in the loop of a conserved hairpin near the 3'-end of 16S rRNA in the 30S particle. May play a critical role in biogenesis of 30S subunits. The sequence is that of Ribosomal RNA small subunit methyltransferase A from Mycolicibacterium paratuberculosis (strain ATCC BAA-968 / K-10) (Mycobacterium paratuberculosis).